The chain runs to 157 residues: Nuclear cap-binding protein subunit 2 (157 aa).

MRNA is bound by residues Tyr-17, Tyr-40, 109–113 (RADWD), 120–124 (RQYGR), and 130–131 (QV). Positions 37 to 115 (CTLYVGNLSY…RVIRADWDAG (79 aa)) constitute an RRM domain.

The protein belongs to the RRM NCBP2 family. Component of the nuclear cap-binding complex (CBC), a heterodimer composed of ncbp-1 and ncbp-2 that interacts with m7GpppG-capped RNA.

Its subcellular location is the nucleus. Component of the cap-binding complex (CBC), which binds co-transcriptionally to the 5' cap of pre-mRNAs and is involved in various processes such as pre-mRNA splicing and RNA-mediated gene silencing (RNAi). The CBC complex is involved in miRNA-mediated RNA interference and is required for primary microRNAs (miRNAs) processing. In the CBC complex, ncbp-2 recognizes and binds capped RNAs (m7GpppG-capped RNA) but requires ncbp-1 to stabilize the movement of its N-terminal loop and lock the CBC into a high affinity cap-binding state with the cap structure. This is Nuclear cap-binding protein subunit 2 (ncbp-2) from Caenorhabditis briggsae.